Reading from the N-terminus, the 40-residue chain is Subtilisin-like serine protease AS-E1 (40 aa).

Positions 4-40 (PWGLARISHRTTGATSYVYDDSAGEGTCSYIIDTGIY) constitute a Peptidase S8 domain. The active-site Charge relay system is the D36.

This sequence belongs to the peptidase S8 family. In terms of assembly, homodimer.

Strongly inhibited by antipain and PMSF. Inhibited by benzamidine and aprotinin by 80% and 17% respectively. Little or no inhibition by EDTA, E-64, iodoacetic acid, leupeptin and FUT-175. Subtilisin-like serine protease. Cleaves prothrombin at 155-Arg-|-Ser-156, 45-Thr-|-Ala-46 and 316-Tyr-|-Ile-317 to produce meizothrombin(desF1)-like molecules. Degrades fibrinogen. Inhibits plasma coagulation. This chain is Subtilisin-like serine protease AS-E1, found in Acremonium sp.